We begin with the raw amino-acid sequence, 217 residues long: Deoxyribose-phosphate aldolase (217 aa).

D95 serves as the catalytic Proton donor/acceptor. K156 (schiff-base intermediate with acetaldehyde) is an active-site residue. The Proton donor/acceptor role is filled by K184.

The protein belongs to the DeoC/FbaB aldolase family. DeoC type 1 subfamily.

It is found in the cytoplasm. The catalysed reaction is 2-deoxy-D-ribose 5-phosphate = D-glyceraldehyde 3-phosphate + acetaldehyde. It functions in the pathway carbohydrate degradation; 2-deoxy-D-ribose 1-phosphate degradation; D-glyceraldehyde 3-phosphate and acetaldehyde from 2-deoxy-alpha-D-ribose 1-phosphate: step 2/2. Functionally, catalyzes a reversible aldol reaction between acetaldehyde and D-glyceraldehyde 3-phosphate to generate 2-deoxy-D-ribose 5-phosphate. The chain is Deoxyribose-phosphate aldolase from Thermosynechococcus vestitus (strain NIES-2133 / IAM M-273 / BP-1).